The primary structure comprises 213 residues: ATP synthase peripheral stalk subunit OSCP, mitochondrial (213 aa).

Residues 1 to 23 (MAALAVSGLSQQVRCFSTSVVRP) constitute a mitochondrion transit peptide. Residues 5-23 (AVSGLSQQVRCFSTSVVRP) carry the SIFI-degron motif. Residues K54, K60, K70, and K73 each carry the N6-acetyllysine modification. The residue at position 90 (K90) is an N6-succinyllysine. N6-acetyllysine; alternate is present on residues K100, K158, and K162. N6-succinyllysine; alternate occurs at positions 100, 158, and 162. An N6-acetyllysine mark is found at K172, K176, and K192. The residue at position 199 (K199) is an N6-succinyllysine.

This sequence belongs to the ATPase delta chain family. As to quaternary structure, component of the ATP synthase complex composed at least of ATP5F1A/subunit alpha, ATP5F1B/subunit beta, ATP5MC1/subunit c (homooctomer), MT-ATP6/subunit a, MT-ATP8/subunit 8, ATP5ME/subunit e, ATP5MF/subunit f, ATP5MG/subunit g, ATP5MK/subunit k, ATP5MJ/subunit j, ATP5F1C/subunit gamma, ATP5F1D/subunit delta, ATP5F1E/subunit epsilon, ATP5PF/subunit F6, ATP5PB/subunit b, ATP5PD/subunit d, ATP5PO/subunit OSCP. ATP synthase complex consists of a soluble F(1) head domain (subunits alpha(3) and beta(3)) - the catalytic core - and a membrane F(0) domain - the membrane proton channel (subunits c, a, 8, e, f, g, k and j). These two domains are linked by a central stalk (subunits gamma, delta, and epsilon) rotating inside the F1 region and a stationary peripheral stalk (subunits F6, b, d, and OSCP). Acetylation at Lys-162 decreases ATP production. Deacetylated by SIRT3. In terms of processing, in response to mitochondrial stress, the precursor protein is ubiquitinated by the SIFI complex in the cytoplasm before mitochondrial import, leading to its degradation. Within the SIFI complex, UBR4 initiates ubiquitin chain that are further elongated or branched by KCMF1.

Its subcellular location is the mitochondrion. The protein resides in the mitochondrion inner membrane. Functionally, subunit OSCP, of the mitochondrial membrane ATP synthase complex (F(1)F(0) ATP synthase or Complex V) that produces ATP from ADP in the presence of a proton gradient across the membrane which is generated by electron transport complexes of the respiratory chain. ATP synthase complex consist of a soluble F(1) head domain - the catalytic core - and a membrane F(1) domain - the membrane proton channel. These two domains are linked by a central stalk rotating inside the F(1) region and a stationary peripheral stalk. During catalysis, ATP synthesis in the catalytic domain of F(1) is coupled via a rotary mechanism of the central stalk subunits to proton translocation. In vivo, can only synthesize ATP although its ATP hydrolase activity can be activated artificially in vitro. Part of the complex F(0) domain. Part of the complex F(0) domain and the peripheric stalk, which acts as a stator to hold the catalytic alpha(3)beta(3) subcomplex and subunit a/ATP6 static relative to the rotary elements. In Bos taurus (Bovine), this protein is ATP synthase peripheral stalk subunit OSCP, mitochondrial.